The sequence spans 183 residues: Protein FAM180B (183 aa).

The N-terminal stretch at 1–23 (MAATLQFLVCLVVAICLLSGVTT) is a signal peptide.

The protein belongs to the FAM180 family.

It is found in the secreted. The sequence is that of Protein FAM180B (FAM180B) from Homo sapiens (Human).